A 354-amino-acid chain; its full sequence is Carbamoyl phosphate synthase small chain (354 aa).

The CPSase stretch occupies residues 1-167 (MEAVLILEDG…KEPKIHKTAN (167 aa)). Residues serine 45, glycine 219, and glycine 221 each contribute to the L-glutamine site. Residues 171–354 (RCVLIDCGVK…DEMIKLKDRK (184 aa)) enclose the Glutamine amidotransferase type-1 domain. Residue cysteine 246 is the Nucleophile of the active site. Residues leucine 247, glutamine 250, asparagine 288, glycine 290, and phenylalanine 291 each coordinate L-glutamine. Residues histidine 330 and glutamate 332 contribute to the active site.

Belongs to the CarA family. In terms of assembly, composed of two chains; the small (or glutamine) chain promotes the hydrolysis of glutamine to ammonia, which is used by the large (or ammonia) chain to synthesize carbamoyl phosphate. Tetramer of heterodimers (alpha,beta)4.

The catalysed reaction is hydrogencarbonate + L-glutamine + 2 ATP + H2O = carbamoyl phosphate + L-glutamate + 2 ADP + phosphate + 2 H(+). It carries out the reaction L-glutamine + H2O = L-glutamate + NH4(+). It functions in the pathway amino-acid biosynthesis; L-arginine biosynthesis; carbamoyl phosphate from bicarbonate: step 1/1. Its pathway is pyrimidine metabolism; UMP biosynthesis via de novo pathway; (S)-dihydroorotate from bicarbonate: step 1/3. In terms of biological role, small subunit of the glutamine-dependent carbamoyl phosphate synthetase (CPSase). CPSase catalyzes the formation of carbamoyl phosphate from the ammonia moiety of glutamine, carbonate, and phosphate donated by ATP, constituting the first step of 2 biosynthetic pathways, one leading to arginine and/or urea and the other to pyrimidine nucleotides. The small subunit (glutamine amidotransferase) binds and cleaves glutamine to supply the large subunit with the substrate ammonia. The chain is Carbamoyl phosphate synthase small chain from Methanocaldococcus jannaschii (strain ATCC 43067 / DSM 2661 / JAL-1 / JCM 10045 / NBRC 100440) (Methanococcus jannaschii).